The sequence spans 106 residues: MSKNFEWVTPDSDLLERESTKVQPPKLYNVVLNNDDYTPMDFVIEVLERFFSHDIDKATQIMLKIHYEGKAICGTYSAEIAETKVAQVTMYSRENEHPLLCTMEQA.

This sequence belongs to the ClpS family. As to quaternary structure, binds to the N-terminal domain of the chaperone ClpA.

In terms of biological role, involved in the modulation of the specificity of the ClpAP-mediated ATP-dependent protein degradation. The protein is ATP-dependent Clp protease adapter protein ClpS of Vibrio campbellii (strain ATCC BAA-1116).